The chain runs to 213 residues: uncharacterized protein (213 aa).

Residues Gly-53, Glu-74, and Asp-97 each coordinate S-adenosyl-L-methionine.

It belongs to the methyltransferase superfamily. YrrT family.

In terms of biological role, could be a S-adenosyl-L-methionine-dependent methyltransferase. This is an uncharacterized protein from Bacillus velezensis (strain DSM 23117 / BGSC 10A6 / LMG 26770 / FZB42) (Bacillus amyloliquefaciens subsp. plantarum).